Here is a 288-residue protein sequence, read N- to C-terminus: Rhox homeobox family member 2B (288 aa).

Positions 16 to 136 are disordered; that stretch reads SPAVDDEKEL…GLEPGNAQQP (121 aa). Residues 39 to 48 are compositionally biased toward acidic residues; that stretch reads VKEEEEDAQP. Residues 68–80 are compositionally biased toward basic and acidic residues; sequence GEEKDGGGEEKDG. Residues 134–193 constitute a DNA-binding region (homeobox); that stretch reads QQPNVHAFTPLQLQELECIFQREQFPSEFLRRRLARSMNVTELAVQIWFENRRAKWRRHQ. The Nuclear localization signal motif lies at 186 to 195; it reads RAKWRRHQRA.

It belongs to the paired-like homeobox family. PEPP subfamily. Expressed in testis, mainly expressed in germ cells, but also detected in somatic cells such as Sertoli cells, Leydig cells and peritubular cells.

The protein resides in the nucleus. Transcription factor maybe involved in reproductive processes. Modulates expression of target genes encoding proteins involved in processes relevant to spermatogenesis. The sequence is that of Rhox homeobox family member 2B from Homo sapiens (Human).